A 517-amino-acid chain; its full sequence is Histone H4 transcription factor (517 aa).

3 C2H2-type zinc fingers span residues 15–39 (LQCE…VTQH), 129–153 (FLCL…VEAH), and 169–193 (VLCG…LRSH). The C2H2-type 4; degenerate zinc-finger motif lies at 199–221 (VACPTCGGMFANNTKFLDHIRRQ). 5 C2H2-type zinc fingers span residues 229–251 (FQCS…MRNH), 255–278 (YKCP…RFRH), 284–306 (FKCD…LDTH), 312–337 (YRCD…RKVH), and 345–368 (YKCH…RKKH). The interval 373 to 517 (PSGHPRFRYK…IAEEPEIQMV (145 aa)) is interaction with NPAT. Residues 374–407 (SGHPRFRYKEHEDGYMRLQLVRYESVELTQQLLR) form a required for activation of histone H4 transcription and contributes to DNA-binding region. A disordered region spans residues 431-460 (TVPGEPGRKEEEEEGKGSEGTALSASQDNP). Over residues 451–460 (TALSASQDNP) the composition is skewed to polar residues.

Binds MBD2 and a histone deacetylase complex. Interacts with NPAT. Post-translationally, ubiquitinated. Ubiquitination may lead to proteasome-mediated degradation. In terms of tissue distribution, ubiquitous. Highly expressed in brain, heart, skeletal muscle, spleen, kidney, small intestine, placenta and liver.

Its subcellular location is the nucleus. In terms of biological role, transcriptional repressor that binds to the consensus sequence 5'-CGGACGTT-3' and to the RB1 promoter. Transcriptional activator that promotes histone H4 gene transcription at the G1/S phase transition in conjunction with NPAT. Also activates transcription of the ATM and PRKDC genes. Autoregulates its expression by associating with its own promoter. This is Histone H4 transcription factor (HINFP) from Homo sapiens (Human).